The primary structure comprises 161 residues: Transcription elongation factor GreA (161 aa).

Residues 43 to 68 (SENAEYEAAREKQAFVEARIKHLEDI) adopt a coiled-coil conformation.

Belongs to the GreA/GreB family.

Functionally, necessary for efficient RNA polymerase transcription elongation past template-encoded arresting sites. The arresting sites in DNA have the property of trapping a certain fraction of elongating RNA polymerases that pass through, resulting in locked ternary complexes. Cleavage of the nascent transcript by cleavage factors such as GreA or GreB allows the resumption of elongation from the new 3'terminus. GreA releases sequences of 2 to 3 nucleotides. This Rickettsia bellii (strain OSU 85-389) protein is Transcription elongation factor GreA.